The sequence spans 238 residues: Uracil-DNA glycosylase (238 aa).

Residue Asp-81 is the Proton acceptor of the active site.

The protein belongs to the uracil-DNA glycosylase (UDG) superfamily. UNG family.

Its subcellular location is the cytoplasm. The catalysed reaction is Hydrolyzes single-stranded DNA or mismatched double-stranded DNA and polynucleotides, releasing free uracil.. Excises uracil residues from the DNA which can arise as a result of misincorporation of dUMP residues by DNA polymerase or due to deamination of cytosine. The chain is Uracil-DNA glycosylase from Corynebacterium efficiens (strain DSM 44549 / YS-314 / AJ 12310 / JCM 11189 / NBRC 100395).